The sequence spans 293 residues: Urease accessory protein UreD (293 aa).

The protein belongs to the UreD family. UreD, UreF and UreG form a complex that acts as a GTP-hydrolysis-dependent molecular chaperone, activating the urease apoprotein by helping to assemble the nickel containing metallocenter of UreC. The UreE protein probably delivers the nickel.

It localises to the cytoplasm. Functionally, required for maturation of urease via the functional incorporation of the urease nickel metallocenter. In Cupriavidus metallidurans (strain ATCC 43123 / DSM 2839 / NBRC 102507 / CH34) (Ralstonia metallidurans), this protein is Urease accessory protein UreD.